The primary structure comprises 475 residues: Na(+)/H(+) antiporter NhaA 2 (475 aa).

The next 12 helical transmembrane spans lie at 44–64 (AQAT…WWAN), 92–112 (LKHI…GLEI), 130–150 (LILC…LFNW), 156–176 (IGWG…LTLV), 186–206 (AFLV…IALF), 211–231 (ISVI…IANY), 232–252 (AGVL…WTML), 255–275 (GVHP…RPML), 331–351 (ALDL…NAGV), 368–388 (LGIV…ACWL), 406–426 (VIGM…IATL), and 442–462 (ILFA…IIAA).

The protein belongs to the NhaA Na(+)/H(+) (TC 2.A.33) antiporter family.

The protein resides in the cell inner membrane. The enzyme catalyses Na(+)(in) + 2 H(+)(out) = Na(+)(out) + 2 H(+)(in). Its function is as follows. Na(+)/H(+) antiporter that extrudes sodium in exchange for external protons. The protein is Na(+)/H(+) antiporter NhaA 2 of Psychromonas ingrahamii (strain DSM 17664 / CCUG 51855 / 37).